Reading from the N-terminus, the 78-residue chain is Small ribosomal subunit protein bS20 (78 aa).

Belongs to the bacterial ribosomal protein bS20 family.

Binds directly to 16S ribosomal RNA. This is Small ribosomal subunit protein bS20 from Streptococcus pneumoniae serotype 2 (strain D39 / NCTC 7466).